The primary structure comprises 325 residues: Glutarate 2-hydroxylase (325 aa).

Fe cation contacts are provided by His-160, Asp-162, and His-292.

It belongs to the glutarate hydroxylase family. As to quaternary structure, homotetramer. Fe(2+) is required as a cofactor.

It carries out the reaction glutarate + 2-oxoglutarate + O2 = (S)-2-hydroxyglutarate + succinate + CO2. It participates in amino-acid degradation. Functionally, acts as an alpha-ketoglutarate-dependent dioxygenase catalyzing hydroxylation of glutarate (GA) to L-2-hydroxyglutarate (L2HG). Functions in a L-lysine degradation pathway that proceeds via cadaverine, glutarate and L-2-hydroxyglutarate. This is Glutarate 2-hydroxylase from Escherichia coli O17:K52:H18 (strain UMN026 / ExPEC).